The sequence spans 211 residues: PDR1 up-regulated protein 1 (211 aa).

A run of 2 helical transmembrane segments spans residues 45 to 67 and 82 to 99; these read ISKA…PYAY and RTIL…NVAA.

Belongs to the PUP1 family.

The protein resides in the mitochondrion membrane. In terms of biological role, mitochondrial protein that contributes to the enhanced virulence of C.glabrata strains that acquired azole resistance. The protein is PDR1 up-regulated protein 1 of Candida glabrata (strain ATCC 2001 / BCRC 20586 / JCM 3761 / NBRC 0622 / NRRL Y-65 / CBS 138) (Yeast).